A 94-amino-acid polypeptide reads, in one-letter code: Long neurotoxin-like OH-31 (94 aa).

The N-terminal stretch at 1–19 is a signal peptide; that stretch reads MKTLLLTLVVVTILCLDLG. 4 cysteine pairs are disulfide-bonded: cysteine 35-cysteine 55, cysteine 37-cysteine 66, cysteine 70-cysteine 81, and cysteine 82-cysteine 87.

It belongs to the three-finger toxin family. Long-chain subfamily. Type II alpha-neurotoxin sub-subfamily. In terms of tissue distribution, expressed by the venom gland.

It is found in the secreted. Functionally, binds with high affinity to muscular nicotinic acetylcholine receptors (nAChRs), whereas it binds with a low affinity to neuronal alpha-7/CHRNA7 nAChRs. The polypeptide is Long neurotoxin-like OH-31 (Ophiophagus hannah (King cobra)).